A 178-amino-acid polypeptide reads, in one-letter code: ATP synthase subunit delta (178 aa).

It belongs to the ATPase delta chain family. As to quaternary structure, F-type ATPases have 2 components, F(1) - the catalytic core - and F(0) - the membrane proton channel. F(1) has five subunits: alpha(3), beta(3), gamma(1), delta(1), epsilon(1). F(0) has three main subunits: a(1), b(2) and c(10-14). The alpha and beta chains form an alternating ring which encloses part of the gamma chain. F(1) is attached to F(0) by a central stalk formed by the gamma and epsilon chains, while a peripheral stalk is formed by the delta and b chains.

The protein resides in the cell inner membrane. In terms of biological role, f(1)F(0) ATP synthase produces ATP from ADP in the presence of a proton or sodium gradient. F-type ATPases consist of two structural domains, F(1) containing the extramembraneous catalytic core and F(0) containing the membrane proton channel, linked together by a central stalk and a peripheral stalk. During catalysis, ATP synthesis in the catalytic domain of F(1) is coupled via a rotary mechanism of the central stalk subunits to proton translocation. Functionally, this protein is part of the stalk that links CF(0) to CF(1). It either transmits conformational changes from CF(0) to CF(1) or is implicated in proton conduction. This is ATP synthase subunit delta from Nitrosomonas europaea (strain ATCC 19718 / CIP 103999 / KCTC 2705 / NBRC 14298).